A 461-amino-acid polypeptide reads, in one-letter code: D-phenylhydantoinase (461 aa).

A divalent metal cation is bound by residues histidine 59, histidine 61, and lysine 151. Position 151 is an N6-carboxylysine (lysine 151). Tyrosine 156 serves as a coordination point for substrate. A divalent metal cation contacts are provided by histidine 182 and histidine 239. Substrate is bound at residue serine 286. Aspartate 313 lines the a divalent metal cation pocket. Asparagine 335 contributes to the substrate binding site.

Belongs to the metallo-dependent hydrolases superfamily. Hydantoinase/dihydropyrimidinase family. In terms of assembly, homotetramer. A divalent metal cation serves as cofactor. Carboxylation allows a single lysine to coordinate two divalent metal cations.

The catalysed reaction is D-5-phenylhydantoin + H2O = N-carbamoyl-D-phenylglycine + H(+). Catalyzes the stereospecific hydrolysis of the cyclic amide bond of D-hydantoin derivatives with an aromatic side chains at the 5'-position. Has no activity on dihydropyrimidines. The physiological function is unknown. The polypeptide is D-phenylhydantoinase (Escherichia coli O81 (strain ED1a)).